We begin with the raw amino-acid sequence, 229 residues long: MGKKYIESAKLIDKSALYNPVEALDLTLKTAKANFDETIELHVRLGVDPRHADQQVRGAVVLPNGTGKTVRVLVFAKGDKAAEAQQAGADFVGADELVQKIQSENWFDYDVVVATPDMMGIVGRIGRVLGPKGLMPNPKSGTVTFDVAKAIEEIKAGKVEYRVDKTAIVHCPIGKKSFGTEKLKENFTALMEALVKAKPAAAKGQYLKSVSVSSTMGPSAKVNPTRALD.

The protein belongs to the universal ribosomal protein uL1 family. Part of the 50S ribosomal subunit.

Its function is as follows. Binds directly to 23S rRNA. The L1 stalk is quite mobile in the ribosome, and is involved in E site tRNA release. Protein L1 is also a translational repressor protein, it controls the translation of the L11 operon by binding to its mRNA. The sequence is that of Large ribosomal subunit protein uL1 from Clostridium beijerinckii (strain ATCC 51743 / NCIMB 8052) (Clostridium acetobutylicum).